The chain runs to 132 residues: Agouti-signaling protein (132 aa).

A signal peptide spans 1-22 (MDVTRLLLATLLVFLCFFTAYS). An N-linked (GlcNAc...) asparagine glycan is attached at Asn-39. A compositionally biased stretch (basic and acidic residues) spans 61–79 (EISRKEAEKKRSSKKEASM). Positions 61 to 87 (EISRKEAEKKRSSKKEASMKKVARPRT) are disordered. Intrachain disulfides connect Cys-93/Cys-108, Cys-100/Cys-114, Cys-107/Cys-125, Cys-111/Cys-132, and Cys-116/Cys-123. One can recognise an Agouti domain in the interval 93–132 (CVATRDSCKPPAPACCDPCASCQCRFFRSACSCRVLSLNC).

Its subcellular location is the secreted. Its function is as follows. Involved in the regulation of melanogenesis. The binding of ASP to MC1R precludes alpha-MSH initiated signaling and thus blocks production of cAMP, leading to a down-regulation of eumelanogenesis (brown/black pigment) and thus increasing synthesis of pheomelanin (yellow/red pigment). This chain is Agouti-signaling protein (ASIP), found in Macaca fascicularis (Crab-eating macaque).